Consider the following 376-residue polypeptide: Riboflavin biosynthesis protein RibD (376 aa).

Residues 1-157 are deaminase; the sequence is MCFPLPSNSF…PIFFHYIQTK (157 aa). The CMP/dCMP-type deaminase domain occupies 13-135; sequence MTDLDYMRRA…QLRQAGVEVV (123 aa). H62 contributes to the Zn(2+) binding site. Residue E64 is the Proton donor of the active site. Residues C87 and C96 each contribute to the Zn(2+) site. The segment at 158–376 is reductase; the sequence is RPYVLMKYAM…LLDYVVISPL (219 aa). A166 contributes to the NADP(+) binding site. A substrate-binding site is contributed by S180. Residue W182 coordinates NADP(+). R196 provides a ligand contact to substrate. NADP(+) is bound by residues T208 and D212. Substrate is bound by residues L216 and R219. S233 serves as a coordination point for NADP(+). Residue E304 participates in substrate binding. Residue 306–312 participates in NADP(+) binding; it reads GSSLNFS.

In the N-terminal section; belongs to the cytidine and deoxycytidylate deaminase family. It in the C-terminal section; belongs to the HTP reductase family. Zn(2+) serves as cofactor.

The catalysed reaction is 2,5-diamino-6-hydroxy-4-(5-phosphoribosylamino)-pyrimidine + H2O + H(+) = 5-amino-6-(5-phospho-D-ribosylamino)uracil + NH4(+). The enzyme catalyses 5-amino-6-(5-phospho-D-ribitylamino)uracil + NADP(+) = 5-amino-6-(5-phospho-D-ribosylamino)uracil + NADPH + H(+). It functions in the pathway cofactor biosynthesis; riboflavin biosynthesis; 5-amino-6-(D-ribitylamino)uracil from GTP: step 2/4. Its pathway is cofactor biosynthesis; riboflavin biosynthesis; 5-amino-6-(D-ribitylamino)uracil from GTP: step 3/4. Its function is as follows. Converts 2,5-diamino-6-(ribosylamino)-4(3h)-pyrimidinone 5'-phosphate into 5-amino-6-(ribosylamino)-2,4(1h,3h)-pyrimidinedione 5'-phosphate. This chain is Riboflavin biosynthesis protein RibD (ribD), found in Actinobacillus pleuropneumoniae (Haemophilus pleuropneumoniae).